The sequence spans 145 residues: Procyclic form-specific polypeptide B-alpha (145 aa).

The first 27 residues, 1-27, serve as a signal peptide directing secretion; that stretch reads MAPRSLYLLAVLLFSANLFAGVGFAAA. The segment at 28-127 is disordered; the sequence is AEGPEDKGLT…PEPEPGAATL (100 aa). Residues 31–52 are compositionally biased toward basic and acidic residues; it reads PEDKGLTKGGKGKGEKGTKVGA. 32 consecutive repeat copies span residues 59–60, 61–62, 63–64, 65–66, 67–68, 69–70, 71–72, 73–74, 75–76, 77–78, 79–80, 81–82, 83–84, 85–86, 87–88, 89–90, 91–92, 93–94, 95–96, 97–98, 99–100, 101–102, 103–104, 105–106, 107–108, 109–110, 111–112, 113–114, 115–116, 117–118, 119–120, and 121–122. Positions 59–122 are 32 X 2 AA tandem repeats of [DE]-P; the sequence is DPDPEPEPEP…EPEPEPEPEP (64 aa). Over residues 60 to 120 the composition is skewed to acidic residues; the sequence is PDPEPEPEPE…EPEPEPEPEP (61 aa). A lipid anchor (GPI-anchor amidated glycine) is attached at G123. Residues 124-145 constitute a propeptide that is removed on maturation; it reads AATLKSVALPFAIAAAALVAAF.

It localises to the cell membrane. In terms of biological role, major surface antigen of procyclic forms. This Trypanosoma brucei brucei protein is Procyclic form-specific polypeptide B-alpha (PARPB).